Consider the following 380-residue polypeptide: Cytochrome b (380 aa).

4 helical membrane-spanning segments follow: residues 34–54 (FGSLLGICLATQILTGLLLAA), 78–99 (WLIRNLHANGASFFFICIYLHI), 114–134 (WNTGVILLLTLMATAFVGYVL), and 179–199 (FFTLHFLLPFMIMGLTLIHLT). His84 and His98 together coordinate heme b. Residues His183 and His197 each contribute to the heme b site. His202 provides a ligand contact to a ubiquinone. 4 helical membrane passes run 227–247 (LKDTLGFMFMLLPLMTLALFS), 289–309 (LGGVLALAASVLILFLAPLLH), 321–341 (LFQLLFWTLTANLLILTWVGS), and 348–368 (FIIIGQLASLTYFTILLILFP).

It belongs to the cytochrome b family. The cytochrome bc1 complex contains 11 subunits: 3 respiratory subunits (MT-CYB, CYC1 and UQCRFS1), 2 core proteins (UQCRC1 and UQCRC2) and 6 low-molecular weight proteins (UQCRH/QCR6, UQCRB/QCR7, UQCRQ/QCR8, UQCR10/QCR9, UQCR11/QCR10 and a cleavage product of UQCRFS1). This cytochrome bc1 complex then forms a dimer. Heme b serves as cofactor.

Its subcellular location is the mitochondrion inner membrane. Its function is as follows. Component of the ubiquinol-cytochrome c reductase complex (complex III or cytochrome b-c1 complex) that is part of the mitochondrial respiratory chain. The b-c1 complex mediates electron transfer from ubiquinol to cytochrome c. Contributes to the generation of a proton gradient across the mitochondrial membrane that is then used for ATP synthesis. This Grus nigricollis (Black-necked crane) protein is Cytochrome b (MT-CYB).